Reading from the N-terminus, the 316-residue chain is Transaldolase (316 aa).

K132 acts as the Schiff-base intermediate with substrate in catalysis.

Belongs to the transaldolase family. Type 1 subfamily. In terms of assembly, homodimer.

Its subcellular location is the cytoplasm. The enzyme catalyses D-sedoheptulose 7-phosphate + D-glyceraldehyde 3-phosphate = D-erythrose 4-phosphate + beta-D-fructose 6-phosphate. Its pathway is carbohydrate degradation; pentose phosphate pathway; D-glyceraldehyde 3-phosphate and beta-D-fructose 6-phosphate from D-ribose 5-phosphate and D-xylulose 5-phosphate (non-oxidative stage): step 2/3. Its function is as follows. Transaldolase is important for the balance of metabolites in the pentose-phosphate pathway. The chain is Transaldolase from Vibrio campbellii (strain ATCC BAA-1116).